The chain runs to 276 residues: Malectin-B (276 aa).

A signal peptide spans 1-26 (MLSIRTVLGPLAAILLTVIGPFGAHG). The Lumenal portion of the chain corresponds to 27–253 (SGLADKVMWA…TPNPYASDNS (227 aa)). A carbohydrate is bound by residues Y67, Y89, Y116, F117, and D186. The tract at residues 202–249 (DVPQLQPHPGLEKKEEEEEEEEEEGSPSKKQSNKNRVQSGPRTPNPYA) is disordered. Positions 216–226 (EEEEEEEEEEG) are enriched in acidic residues. Residues 229-249 (SKKQSNKNRVQSGPRTPNPYA) are compositionally biased toward polar residues. N-linked (GlcNAc...) asparagine glycosylation is present at N252. Residues 254–274 (SLMFPILVAFGVFIPTLFCLC) traverse the membrane as a helical segment. Residues 275 to 276 (RL) are Cytoplasmic-facing.

This sequence belongs to the malectin family.

It localises to the endoplasmic reticulum membrane. Its function is as follows. Carbohydrate-binding protein with a strong ligand preference for Glc2-N-glycan. May play a role in the early steps of protein N-glycosylation. Can bind di- or higher oligomers but not monomers of glucose, including maltose, maltotriose, maltotetraose, maltoheptaose, nigerose, kojibose, cellobiose and isomaltose, although based on their subcellular locations, these are unlikely to all be physiological ligands. This Xenopus laevis (African clawed frog) protein is Malectin-B.